We begin with the raw amino-acid sequence, 121 residues long: Large ribosomal subunit protein uL14 (121 aa).

It belongs to the universal ribosomal protein uL14 family. In terms of assembly, part of the 50S ribosomal subunit. Forms a cluster with proteins L3 and L19. In the 70S ribosome, L14 and L19 interact and together make contacts with the 16S rRNA in bridges B5 and B8.

Binds to 23S rRNA. Forms part of two intersubunit bridges in the 70S ribosome. The sequence is that of Large ribosomal subunit protein uL14 from Azobacteroides pseudotrichonymphae genomovar. CFP2.